An 886-amino-acid polypeptide reads, in one-letter code: Translation initiation factor IF-2 (886 aa).

Disordered regions lie at residues 1 to 25 (MSET…LKRP), 50 to 229 (RRAL…PAEE), and 253 to 272 (KGAE…TGDE). Residues 50 to 60 (RRALGEPHVLR) are compositionally biased toward basic and acidic residues. Positions 63–73 (APALDVVAPAP) are enriched in low complexity. Residues 74-83 (QAAPPAPTQQ) show a composition bias toward pro residues. Residues 84–106 (PQPRVASRPQPQQRSSSGVILRS) are compositionally biased toward low complexity. Residues 107-181 (LTEEEREARS…KRRSESEAKR (75 aa)) are compositionally biased toward basic and acidic residues. Positions 185-225 (GGEPAPAGANAAPRKAPALSAAPGSAAPSGQPGPAGAVGAR) are enriched in low complexity. Residues 383–553 (SRPPVVTIMG…ALQAELLDLK (171 aa)) enclose the tr-type G domain. The segment at 392–399 (GHVDHGKT) is G1. A GTP-binding site is contributed by 392-399 (GHVDHGKT). The interval 417–421 (GITQH) is G2. Residues 439 to 442 (DTPG) are G3. Residues 439–443 (DTPGH) and 493–496 (NKID) contribute to the GTP site. Residues 493–496 (NKID) form a G4 region. The segment at 529–531 (SAT) is G5.

This sequence belongs to the TRAFAC class translation factor GTPase superfamily. Classic translation factor GTPase family. IF-2 subfamily.

The protein resides in the cytoplasm. Its function is as follows. One of the essential components for the initiation of protein synthesis. Protects formylmethionyl-tRNA from spontaneous hydrolysis and promotes its binding to the 30S ribosomal subunits. Also involved in the hydrolysis of GTP during the formation of the 70S ribosomal complex. The sequence is that of Translation initiation factor IF-2 from Methylocella silvestris (strain DSM 15510 / CIP 108128 / LMG 27833 / NCIMB 13906 / BL2).